A 124-amino-acid polypeptide reads, in one-letter code: Small ribosomal subunit protein uS12 (124 aa).

At Asp-89 the chain carries 3-methylthioaspartic acid.

The protein belongs to the universal ribosomal protein uS12 family. As to quaternary structure, part of the 30S ribosomal subunit. Contacts proteins S8 and S17. May interact with IF1 in the 30S initiation complex.

With S4 and S5 plays an important role in translational accuracy. Functionally, interacts with and stabilizes bases of the 16S rRNA that are involved in tRNA selection in the A site and with the mRNA backbone. Located at the interface of the 30S and 50S subunits, it traverses the body of the 30S subunit contacting proteins on the other side and probably holding the rRNA structure together. The combined cluster of proteins S8, S12 and S17 appears to hold together the shoulder and platform of the 30S subunit. This chain is Small ribosomal subunit protein uS12, found in Shewanella putrefaciens (strain CN-32 / ATCC BAA-453).